The following is a 191-amino-acid chain: Thymidylate kinase (191 aa).

An ATP-binding site is contributed by 7–14 (GIDTCGKS).

The protein belongs to the thymidylate kinase family.

The catalysed reaction is dTMP + ATP = dTDP + ADP. Functionally, phosphorylation of dTMP to form dTDP in both de novo and salvage pathways of dTTP synthesis. The protein is Thymidylate kinase of Sulfurovum sp. (strain NBC37-1).